The chain runs to 125 residues: Fluoride-specific ion channel FluC (125 aa).

A run of 4 helical transmembrane segments spans residues 6–26 (AWIA…SGLV), 36–56 (WGTW…WALA), 68–88 (FIVL…AFEA), and 97–117 (WLLA…CVFL). Residues glycine 76 and threonine 79 each contribute to the Na(+) site.

The protein belongs to the fluoride channel Fluc/FEX (TC 1.A.43) family.

It is found in the cell inner membrane. It catalyses the reaction fluoride(in) = fluoride(out). Its activity is regulated as follows. Na(+) is not transported, but it plays an essential structural role and its presence is essential for fluoride channel function. Functionally, fluoride-specific ion channel. Important for reducing fluoride concentration in the cell, thus reducing its toxicity. The protein is Fluoride-specific ion channel FluC of Nitrosococcus oceani (strain ATCC 19707 / BCRC 17464 / JCM 30415 / NCIMB 11848 / C-107).